The chain runs to 512 residues: Allene oxide synthase 1, chloroplastic (512 aa).

The N-terminal 25 residues, 1–25, are a transit peptide targeting the chloroplast; that stretch reads MATAAACISFASPSPARVVIRRQTR. A disordered region spans residues 23-43; the sequence is QTRASASASATDRQEVVSPKR. Residues lysine 127, histidine 158, and lysine 162 each coordinate heme b. Asparagine 315 contributes to the (13S)-hydroperoxy-(9Z,11E,15Z)-octadecatrienoate binding site. Positions 463 and 465 each coordinate heme b.

This sequence belongs to the cytochrome P450 family. Heme b serves as cofactor. In terms of tissue distribution, expressed in coleoptiles, and at lower level in leaves of dark-grown seedlings.

It is found in the plastid. The protein localises to the chloroplast membrane. It carries out the reaction (13S)-hydroperoxy-(9Z,11E,15Z)-octadecatrienoate = (9Z,13S,15Z)-12,13-epoxyoctadeca-9,11,15-trienoate + H2O. It functions in the pathway lipid metabolism; oxylipin biosynthesis. Involved in the biosynthesis of jasmonic acid, a growth regulator that is implicated also as a signaling molecule in plant defense. Converts 13-hydroperoxylinolenic acid to 12,13-epoxylinolenic acid. The protein is Allene oxide synthase 1, chloroplastic (CYP74A1) of Oryza sativa subsp. japonica (Rice).